A 398-amino-acid polypeptide reads, in one-letter code: tRNA(Ile)-lysidine synthase (398 aa).

17 to 22 is a binding site for ATP; the sequence is SGGPDS.

This sequence belongs to the tRNA(Ile)-lysidine synthase family.

The protein resides in the cytoplasm. The catalysed reaction is cytidine(34) in tRNA(Ile2) + L-lysine + ATP = lysidine(34) in tRNA(Ile2) + AMP + diphosphate + H(+). In terms of biological role, ligates lysine onto the cytidine present at position 34 of the AUA codon-specific tRNA(Ile) that contains the anticodon CAU, in an ATP-dependent manner. Cytidine is converted to lysidine, thus changing the amino acid specificity of the tRNA from methionine to isoleucine. The chain is tRNA(Ile)-lysidine synthase from Mesoplasma florum (strain ATCC 33453 / NBRC 100688 / NCTC 11704 / L1) (Acholeplasma florum).